The following is a 664-amino-acid chain: L-glutamate oxidase precursor (664 aa).

The tat-type signal signal peptide spans Met-1–Ala-44. Residues Ala-105, Glu-124, Ala-125, Arg-133, Met-161, Arg-162, Asp-638, Trp-646, and Ile-647 each contribute to the FAD site.

The protein belongs to the flavin monoamine oxidase family. LGOX subfamily. In terms of assembly, the mature enzyme is a heterohexamer composed of 2 alpha chains, 2 beta chains and 2 gamma chains (alpha2beta2gamma2). Requires FAD as cofactor. Predicted to be exported by the Tat system. The position of the signal peptide cleavage has not been experimentally proven. In terms of processing, the precursor form is proteolytically cleaved by an endopeptidase into alpha, beta and gamma chains, which form the stable mature enzyme.

The protein localises to the secreted. The catalysed reaction is L-glutamate + O2 + H2O = H2O2 + 2-oxoglutarate + NH4(+). Its activity is regulated as follows. Activity is stimulated in the presence of Mn(2+), Ca(2+) or Mg(2+). Its function is as follows. Catalyzes the oxidative deamination of L-glutamate to 2-ketoglutarate along with the production of ammonia and hydrogen peroxide. The sequence is that of L-glutamate oxidase precursor from Streptomyces viridosporus (strain ATCC 14672 / DSM 40746 / JCM 4963 / KCTC 9882 / NRRL B-12104 / FH 1290) (Streptomyces ghanaensis).